The primary structure comprises 44 residues: Photosystem I reaction center subunit IX (44 aa).

A helical transmembrane segment spans residues 7–27; it reads YLSTAPVLAISWLIFVAGLLI.

The protein belongs to the PsaJ family.

It is found in the plastid. It localises to the chloroplast thylakoid membrane. In terms of biological role, may help in the organization of the PsaE and PsaF subunits. The protein is Photosystem I reaction center subunit IX of Larix decidua (European larch).